The primary structure comprises 381 residues: UDP-N-acetylglucosamine--N-acetylmuramyl-(pentapeptide) pyrophosphoryl-undecaprenol N-acetylglucosamine transferase (381 aa).

UDP-N-acetyl-alpha-D-glucosamine contacts are provided by residues 10-12 (TGG), asparagine 124, arginine 165, serine 190, isoleucine 245, and glutamine 290. Positions 361–381 (WGSPAGQERPGHGPVRPPDLA) are disordered.

The protein belongs to the glycosyltransferase 28 family. MurG subfamily.

It localises to the cell inner membrane. The catalysed reaction is di-trans,octa-cis-undecaprenyl diphospho-N-acetyl-alpha-D-muramoyl-L-alanyl-D-glutamyl-meso-2,6-diaminopimeloyl-D-alanyl-D-alanine + UDP-N-acetyl-alpha-D-glucosamine = di-trans,octa-cis-undecaprenyl diphospho-[N-acetyl-alpha-D-glucosaminyl-(1-&gt;4)]-N-acetyl-alpha-D-muramoyl-L-alanyl-D-glutamyl-meso-2,6-diaminopimeloyl-D-alanyl-D-alanine + UDP + H(+). The protein operates within cell wall biogenesis; peptidoglycan biosynthesis. Cell wall formation. Catalyzes the transfer of a GlcNAc subunit on undecaprenyl-pyrophosphoryl-MurNAc-pentapeptide (lipid intermediate I) to form undecaprenyl-pyrophosphoryl-MurNAc-(pentapeptide)GlcNAc (lipid intermediate II). The polypeptide is UDP-N-acetylglucosamine--N-acetylmuramyl-(pentapeptide) pyrophosphoryl-undecaprenol N-acetylglucosamine transferase (Anaeromyxobacter sp. (strain Fw109-5)).